Here is a 345-residue protein sequence, read N- to C-terminus: S-adenosylmethionine:tRNA ribosyltransferase-isomerase (345 aa).

It belongs to the QueA family. In terms of assembly, monomer.

The protein localises to the cytoplasm. It carries out the reaction 7-aminomethyl-7-carbaguanosine(34) in tRNA + S-adenosyl-L-methionine = epoxyqueuosine(34) in tRNA + adenine + L-methionine + 2 H(+). It participates in tRNA modification; tRNA-queuosine biosynthesis. Transfers and isomerizes the ribose moiety from AdoMet to the 7-aminomethyl group of 7-deazaguanine (preQ1-tRNA) to give epoxyqueuosine (oQ-tRNA). This chain is S-adenosylmethionine:tRNA ribosyltransferase-isomerase, found in Shewanella sp. (strain MR-7).